We begin with the raw amino-acid sequence, 270 residues long: Probable aquaporin NIP-type (270 aa).

The next 2 membrane-spanning stretches (helical) occupy residues 45-65 and 72-92; these read LIAE…SVAV and VTFP…VYTV. An NPA 1 motif is present at residues 101-103; the sequence is NPA. 3 helical membrane-spanning segments follow: residues 121–141, 160–180, and 188–208; these read LYII…ALLF, SLAI…GVAT, and VAGI…GPIS. The NPA 2 signature appears at 213–215; that stretch reads NPA. Residues 231 to 251 form a helical membrane-spanning segment; that stretch reads WVYVVGPIIGTLAGAFVYNLI.

It belongs to the MIP/aquaporin (TC 1.A.8) family. NIP (TC 1.A.8.12) subfamily. In terms of tissue distribution, pollen specific.

It localises to the membrane. Functionally, aquaporins facilitate the transport of water and small neutral solutes across cell membranes. In Nicotiana alata (Winged tobacco), this protein is Probable aquaporin NIP-type.